Consider the following 505-residue polypeptide: ATP synthase subunit alpha, chloroplastic (505 aa).

170–177 (GDRQTGKT) contributes to the ATP binding site.

It belongs to the ATPase alpha/beta chains family. As to quaternary structure, F-type ATPases have 2 components, CF(1) - the catalytic core - and CF(0) - the membrane proton channel. CF(1) has five subunits: alpha(3), beta(3), gamma(1), delta(1), epsilon(1). CF(0) has four main subunits: a, b, b' and c.

It localises to the plastid. The protein localises to the chloroplast thylakoid membrane. It catalyses the reaction ATP + H2O + 4 H(+)(in) = ADP + phosphate + 5 H(+)(out). Produces ATP from ADP in the presence of a proton gradient across the membrane. The alpha chain is a regulatory subunit. In Carica papaya (Papaya), this protein is ATP synthase subunit alpha, chloroplastic.